A 222-amino-acid chain; its full sequence is Probable fimbrial chaperone EcpB (222 aa).

An N-terminal signal peptide occupies residues 1–20 (MKKHLLPLALLLSGISPAQA).

Belongs to the EcpB/EcpE family.

In terms of biological role, part of the ecpRABCDE operon, which encodes the E.coli common pilus (ECP). ECP is found in both commensal and pathogenic strains and plays a dual role in early-stage biofilm development and host cell recognition. The protein is Probable fimbrial chaperone EcpB (ecpB) of Escherichia coli O7:K1 (strain IAI39 / ExPEC).